Reading from the N-terminus, the 373-residue chain is LIM domain-binding protein 2 (373 aa).

Disordered stretches follow at residues 244–291 and 327–373; these read APPA…ANLS and QYDA…QASQ. A compositionally biased stretch (low complexity) spans 263-280; it reads STSSTSNSSAGNNANSTG. In terms of domain architecture, LIM interaction domain (LID) spans 298–337; that stretch reads DVMVVGEPTLMGGEFGDEDERLITRLENTQYDAANGMDDE. Polar residues predominate over residues 341–361; the sequence is NNSPALGNNSPWNSKPPATQE.

This sequence belongs to the LDB family. Interacts with LHX9. Interacts with SLK; leading to negatively regulate SLK kinase activity. Interacts with LMO4. Ubiquitinated by RLIM/RNF12, leading to its degradation by the proteasome.

The protein localises to the nucleus. Its function is as follows. Transcription cofactor. Binds to the LIM domain of a wide variety of LIM domain-containing transcription factors. In Homo sapiens (Human), this protein is LIM domain-binding protein 2 (LDB2).